Reading from the N-terminus, the 350-residue chain is Phenylalanine--tRNA ligase alpha subunit (350 aa).

Glu271 lines the Mg(2+) pocket.

Belongs to the class-II aminoacyl-tRNA synthetase family. Phe-tRNA synthetase alpha subunit type 1 subfamily. As to quaternary structure, tetramer of two alpha and two beta subunits. It depends on Mg(2+) as a cofactor.

The protein localises to the cytoplasm. The catalysed reaction is tRNA(Phe) + L-phenylalanine + ATP = L-phenylalanyl-tRNA(Phe) + AMP + diphosphate + H(+). The sequence is that of Phenylalanine--tRNA ligase alpha subunit from Verminephrobacter eiseniae (strain EF01-2).